The primary structure comprises 357 residues: tRNA/tmRNA (uracil-C(5))-methyltransferase (357 aa).

5 residues coordinate S-adenosyl-L-methionine: Q180, Y209, N214, E230, and D290. C315 (nucleophile) is an active-site residue. The Proton acceptor role is filled by E349.

The protein belongs to the class I-like SAM-binding methyltransferase superfamily. RNA M5U methyltransferase family. TrmA subfamily.

It catalyses the reaction uridine(54) in tRNA + S-adenosyl-L-methionine = 5-methyluridine(54) in tRNA + S-adenosyl-L-homocysteine + H(+). It carries out the reaction uridine(341) in tmRNA + S-adenosyl-L-methionine = 5-methyluridine(341) in tmRNA + S-adenosyl-L-homocysteine + H(+). In terms of biological role, dual-specificity methyltransferase that catalyzes the formation of 5-methyluridine at position 54 (m5U54) in all tRNAs, and that of position 341 (m5U341) in tmRNA (transfer-mRNA). The chain is tRNA/tmRNA (uracil-C(5))-methyltransferase from Campylobacter jejuni (strain RM1221).